The sequence spans 153 residues: Protein Smg homolog (153 aa).

The protein belongs to the Smg family.

This is Protein Smg homolog from Neisseria gonorrhoeae (strain ATCC 700825 / FA 1090).